The sequence spans 445 residues: 2-oxoisovalerate dehydrogenase subunit alpha, mitochondrial (445 aa).

A mitochondrion-targeting transit peptide spans 1-45; the sequence is MAVAIAAARVWRLNRGLSQAALLLLRQPGARGLARSHPPRQQQQF. A disordered region spans residues 33 to 52; the sequence is LARSHPPRQQQQFSSLDDKP. Thiamine diphosphate is bound by residues Tyr-158 and Arg-159. Ser-206 lines the K(+) pocket. Position 207 (Ser-207) interacts with thiamine diphosphate. K(+) is bound by residues Pro-208, Thr-211, and Gln-212. Mg(2+) is bound at residue Glu-238. Positions 239, 240, and 265 each coordinate thiamine diphosphate. Mg(2+) is bound by residues Asn-267 and Tyr-269. Position 336 (His-336) interacts with thiamine diphosphate. Ser-337 carries the post-translational modification Phosphoserine; by BCKDK. Thr-338 bears the Phosphothreonine mark. 2 positions are modified to phosphoserine: Ser-339 and Ser-347. Lys-356 is modified (N6-acetyllysine; alternate). An N6-succinyllysine; alternate modification is found at Lys-356. Lys-380 is modified (N6-succinyllysine).

This sequence belongs to the BCKDHA family. Heterotetramer of 2 alpha/BCKDHA and 2 beta chains/BCKDHB that forms the branched-chain alpha-keto acid decarboxylase (E1) component of the BCKD complex. The branched-chain alpha-ketoacid dehydrogenase is a large complex composed of three major building blocks E1, E2 and E3. It is organized around E2, a 24-meric cubic core composed of DBT, to which are associated 6 to 12 copies of E1, and approximately 6 copies of the dehydrogenase E3, a DLD dimer. Interacts with PPM1K. Requires thiamine diphosphate as cofactor. Mg(2+) is required as a cofactor. In terms of processing, phosphorylated at Ser-337 by BCKDK and dephosphorylated by protein phosphatase PPM1K.

It localises to the mitochondrion matrix. The catalysed reaction is N(6)-[(R)-lipoyl]-L-lysyl-[protein] + 3-methyl-2-oxobutanoate + H(+) = N(6)-[(R)-S(8)-2-methylpropanoyldihydrolipoyl]-L-lysyl-[protein] + CO2. Together with BCKDHB forms the heterotetrameric E1 subunit of the mitochondrial branched-chain alpha-ketoacid dehydrogenase (BCKD) complex. The BCKD complex catalyzes the multi-step oxidative decarboxylation of alpha-ketoacids derived from the branched-chain amino-acids valine, leucine and isoleucine producing CO2 and acyl-CoA which is subsequently utilized to produce energy. The E1 subunit catalyzes the first step with the decarboxylation of the alpha-ketoacid forming an enzyme-product intermediate. A reductive acylation mediated by the lipoylamide cofactor of E2 extracts the acyl group from the E1 active site for the next step of the reaction. This Homo sapiens (Human) protein is 2-oxoisovalerate dehydrogenase subunit alpha, mitochondrial.